Here is a 206-residue protein sequence, read N- to C-terminus: FMN-dependent NADH:quinone oxidoreductase 1 (206 aa).

FMN contacts are provided by residues Ser-9, 15 to 17 (SVS), and 139 to 142 (SRGG).

Belongs to the azoreductase type 1 family. As to quaternary structure, homodimer. It depends on FMN as a cofactor.

It catalyses the reaction 2 a quinone + NADH + H(+) = 2 a 1,4-benzosemiquinone + NAD(+). The catalysed reaction is N,N-dimethyl-1,4-phenylenediamine + anthranilate + 2 NAD(+) = 2-(4-dimethylaminophenyl)diazenylbenzoate + 2 NADH + 2 H(+). Quinone reductase that provides resistance to thiol-specific stress caused by electrophilic quinones. Functionally, also exhibits azoreductase activity. Catalyzes the reductive cleavage of the azo bond in aromatic azo compounds to the corresponding amines. The sequence is that of FMN-dependent NADH:quinone oxidoreductase 1 from Cupriavidus pinatubonensis (strain JMP 134 / LMG 1197) (Cupriavidus necator (strain JMP 134)).